Here is a 273-residue protein sequence, read N- to C-terminus: Non-homologous end joining protein Ku (273 aa).

The Ku domain occupies 13-190; sequence KLSLVTCPVA…FTGIEKKSDA (178 aa). The tract at residues 227–251 is disordered; the sequence is KKKAKKPSKAKASKSTKGDDEEKSN. The span at 228–240 shows a compositional bias: basic residues; that stretch reads KKAKKPSKAKASK.

This sequence belongs to the prokaryotic Ku family. Homodimer. Interacts with LigD.

In terms of biological role, with LigD forms a non-homologous end joining (NHEJ) DNA repair enzyme, which repairs dsDNA breaks with reduced fidelity. Binds linear dsDNA with 5'- and 3'- overhangs but not closed circular dsDNA nor ssDNA. Recruits and stimulates the ligase activity of LigD. This Allorhizobium ampelinum (strain ATCC BAA-846 / DSM 112012 / S4) (Agrobacterium vitis (strain S4)) protein is Non-homologous end joining protein Ku.